Consider the following 565-residue polypeptide: Small ribosomal subunit protein bS1 (565 aa).

S1 motif domains are found at residues 30–96 (SSVI…LSRD), 114–180 (NEKV…VSRR), 201–269 (GQVI…LGMK), 286–356 (NARF…LGLK), 373–443 (GSTV…LGVK), and 454–529 (GDVK…VSIK).

The protein belongs to the bacterial ribosomal protein bS1 family. The initiator methionine may be removed.

Its function is as follows. Binds mRNA; thus facilitating recognition of the initiation point. It is needed to translate mRNA with a short Shine-Dalgarno (SD) purine-rich sequence. The chain is Small ribosomal subunit protein bS1 (rpsA) from Rhodopseudomonas palustris (strain ATCC BAA-98 / CGA009).